The sequence spans 322 residues: N-acetyl-gamma-glutamyl-phosphate reductase (322 aa).

The active site involves Cys-132.

The protein belongs to the NAGSA dehydrogenase family. Type 1 subfamily.

It localises to the cytoplasm. It carries out the reaction N-acetyl-L-glutamate 5-semialdehyde + phosphate + NADP(+) = N-acetyl-L-glutamyl 5-phosphate + NADPH + H(+). It functions in the pathway amino-acid biosynthesis; L-arginine biosynthesis; N(2)-acetyl-L-ornithine from L-glutamate: step 3/4. Catalyzes the NADPH-dependent reduction of N-acetyl-5-glutamyl phosphate to yield N-acetyl-L-glutamate 5-semialdehyde. The chain is N-acetyl-gamma-glutamyl-phosphate reductase from Bacteroides fragilis (strain YCH46).